The following is a 294-amino-acid chain: NAD kinase (294 aa).

Asp74 serves as the catalytic Proton acceptor. NAD(+) is bound by residues 74-75, 148-149, His159, Arg176, Asp178, 189-194, and Gln249; these read DG, NE, and TAYSLS.

It belongs to the NAD kinase family. A divalent metal cation is required as a cofactor.

It localises to the cytoplasm. It carries out the reaction NAD(+) + ATP = ADP + NADP(+) + H(+). In terms of biological role, involved in the regulation of the intracellular balance of NAD and NADP, and is a key enzyme in the biosynthesis of NADP. Catalyzes specifically the phosphorylation on 2'-hydroxyl of the adenosine moiety of NAD to yield NADP. In Vibrio cholerae serotype O1 (strain ATCC 39541 / Classical Ogawa 395 / O395), this protein is NAD kinase.